Reading from the N-terminus, the 98-residue chain is NADH-ubiquinone oxidoreductase chain 4L (98 aa).

The next 3 membrane-spanning stretches (helical) occupy residues 2-22, 29-49, and 61-81; these read PSIF…TLVF, SLLC…LIIL, and ILLL…LVMV.

It belongs to the complex I subunit 4L family. In terms of assembly, core subunit of respiratory chain NADH dehydrogenase (Complex I) which is composed of 45 different subunits.

The protein resides in the mitochondrion inner membrane. It catalyses the reaction a ubiquinone + NADH + 5 H(+)(in) = a ubiquinol + NAD(+) + 4 H(+)(out). In terms of biological role, core subunit of the mitochondrial membrane respiratory chain NADH dehydrogenase (Complex I) which catalyzes electron transfer from NADH through the respiratory chain, using ubiquinone as an electron acceptor. Part of the enzyme membrane arm which is embedded in the lipid bilayer and involved in proton translocation. The polypeptide is NADH-ubiquinone oxidoreductase chain 4L (MT-ND4L) (Avahi laniger (Eastern woolly lemur)).